The sequence spans 416 residues: MAAEIICVGTELLLGEILNSNSQYLAQELARLGIPHYFQTVVGDNPERIKRAIAIARERAQILIFTGGLGPTPDDLTTETIADFFRTPLQENIAVIADIEAKFAQTGRPMAANNRKQALLPLGAELLANATGTAPGMIWHPQPDLLILTFPGVPSEMRQMWQGVAVPYLQSQGWGKTTIYSRVLRFQGIGESALAEKVTDFFTLTNPTVAPYAGKGEVRLRISCPASSEALAKEIIDPIAEEIKAIAGLDYFGQDEDTIASVVGALLRERGETVAVAESCTGGGLGALLTDQPGSSDYFWGGVIAYYNQVKIKLLGVDPEIIEYCGAVSEATAEAMALGVKERLGTDWGIAITGIAGPGGGTEEKPIGTVYVGLADPHGQASHILLQFGDRRGREWIRYLSACQALDHLRRRLQSS.

This sequence belongs to the CinA family.

This chain is CinA-like protein, found in Synechocystis sp. (strain ATCC 27184 / PCC 6803 / Kazusa).